The chain runs to 571 residues: Hsp70-Hsp90 organizing protein 2 (571 aa).

TPR repeat units follow at residues 2–35, 37–69, and 70–103; these read ADEAKAKGNAAFSSGDFNSAVNHFTDAINLTPTN, VLFSNRSAAHASLNHYDEALSDAKKTVELKPDW, and GKGYSRLGAAHLGLNQFDEAVEAYSKGLEIDPSN. Positions 117 to 137 are disordered; it reads ASRSRASAPNPFGDAFQGPEM. The region spanning 134–173 is the STI1 1 domain; that stretch reads GPEMWSKLTADPSTRGLLKQPDFVNMMKEIQRNPSNLNLY. Ser168 carries the phosphoserine modification. The span at 198–207 shows a compositional bias: acidic residues; it reads DDMEIGEEEM. Residues 198-245 form a disordered region; it reads DDMEIGEEEMAVPSRKEPEVEKKRKPEPEPEPEPEFGEEKQKKLKAQK. 2 stretches are compositionally biased toward basic and acidic residues: residues 211–225 and 234–245; these read SRKEPEVEKKRKPEP and GEEKQKKLKAQK. Positions 240 to 257 match the Bipartite nuclear localization signal motif; the sequence is KLKAQKEKELGNAAYKKK. TPR repeat units follow at residues 243 to 276, 278 to 310, 322 to 355, 382 to 415, 417 to 449, and 450 to 483; these read AQKEKELGNAAYKKKDFETAIQHYSTAMEIDDED, SYITNRAAVHLEMGKYDECIKDCDKAVERGREL, TRKGTALGKMAKVSKDYEPVIQTYQKALTEHRNP, GDEEREKGNDFFKEQKYPDAVRHYTEAIKRNPKD, RAYSNRAACYTKLGAMPEGLKDAEKCIELDPTF, and LKGYSRKGAVQFFMKEYDNAMETYQKGLEHDPNN. In terms of domain architecture, STI1 2 spans 520–559; the sequence is DPEIQNILTDPVMRQVLSDLQENPAAAQKHMQNPMIMNKI.

As to quaternary structure, co-chaperone that forms a complex with HSP70 and HSP90 and preproteins (e.g. chloroplast preproteins). Phosphorylated. Post-translationally, acetylated.

It is found in the cytoplasm. The protein resides in the nucleus. In terms of biological role, mediates the association of the molecular chaperones HSP70 and HSP90. Mediates nuclear encoded chloroplast preproteins binding to HSP90 prior to chloroplastic sorting. In Arabidopsis thaliana (Mouse-ear cress), this protein is Hsp70-Hsp90 organizing protein 2 (HOP2).